The sequence spans 584 residues: Sperm-associated microtubule inner protein 4 (584 aa).

It localises to the cytoplasm. The protein localises to the cytoskeleton. Its subcellular location is the microtubule organizing center. The protein resides in the centrosome. It is found in the flagellum axoneme. Its function is as follows. Microtubule inner protein (MIP) part of the dynein-decorated doublet microtubules (DMTs) in flagellum axoneme. May serve to reinforce and thus stabilize the microtubule structure in the sperm flagella. The chain is Sperm-associated microtubule inner protein 4 (SPMIP4) from Bos taurus (Bovine).